We begin with the raw amino-acid sequence, 279 residues long: Shikimate dehydrogenase (NADP(+)) (279 aa).

Shikimate-binding positions include 21–23 and Thr68; that span reads SRS. Lys72 serves as the catalytic Proton acceptor. An NADP(+)-binding site is contributed by Asp83. Shikimate is bound by residues Asn92 and Asp107. NADP(+) is bound by residues 132–136, 156–161, and Leu221; these read GAGGA and NRTVER. Tyr223 provides a ligand contact to shikimate. Gly244 lines the NADP(+) pocket.

The protein belongs to the shikimate dehydrogenase family. In terms of assembly, homodimer.

It catalyses the reaction shikimate + NADP(+) = 3-dehydroshikimate + NADPH + H(+). Its pathway is metabolic intermediate biosynthesis; chorismate biosynthesis; chorismate from D-erythrose 4-phosphate and phosphoenolpyruvate: step 4/7. Functionally, involved in the biosynthesis of the chorismate, which leads to the biosynthesis of aromatic amino acids. Catalyzes the reversible NADPH linked reduction of 3-dehydroshikimate (DHSA) to yield shikimate (SA). The polypeptide is Shikimate dehydrogenase (NADP(+)) (Nitrobacter winogradskyi (strain ATCC 25391 / DSM 10237 / CIP 104748 / NCIMB 11846 / Nb-255)).